The sequence spans 283 residues: MPKICCSRSATQVVVAQKSNSGKGRNGEGGIKYGFSLIKGKSNHSMEDYHVAKFTNFNGNELGLFAIFDGHKGDHVAAYLQKHLFSNILKDGEFLVDPRRAIAKAYENTDQKILADNRTDLESGGSTAVTAILINGKALWIANVGDSRAIVSSRGKAKQMSVDHDPDDDTERSMIESKGGFVTNRPGDVPRVNGLLAVSRVFGDKNLKAYLNSEPEIKDVTIDSHTDFLILASDGISKVMSNQEAVDVAKKLKDPKEAARQVVAEALKRNSKDDISCIVVRFR.

A PPM-type phosphatase domain is found at 32 to 282; sequence KYGFSLIKGK…DDISCIVVRF (251 aa). The Mn(2+) site is built by D69, G70, D234, and D273.

Belongs to the PP2C family. Requires Mg(2+) as cofactor. It depends on Mn(2+) as a cofactor.

The catalysed reaction is O-phospho-L-seryl-[protein] + H2O = L-seryl-[protein] + phosphate. The enzyme catalyses O-phospho-L-threonyl-[protein] + H2O = L-threonyl-[protein] + phosphate. In Arabidopsis thaliana (Mouse-ear cress), this protein is Probable protein phosphatase 2C 17.